The following is a 597-amino-acid chain: Elongation factor 4 (597 aa).

A tr-type G domain is found at 2 to 184; that stretch reads KNIRNFSIIA…EIVAKIPAPT (183 aa). GTP-binding positions include 14–19 and 131–134; these read DHGKST and NKID.

This sequence belongs to the TRAFAC class translation factor GTPase superfamily. Classic translation factor GTPase family. LepA subfamily.

The protein localises to the cell inner membrane. It carries out the reaction GTP + H2O = GDP + phosphate + H(+). In terms of biological role, required for accurate and efficient protein synthesis under certain stress conditions. May act as a fidelity factor of the translation reaction, by catalyzing a one-codon backward translocation of tRNAs on improperly translocated ribosomes. Back-translocation proceeds from a post-translocation (POST) complex to a pre-translocation (PRE) complex, thus giving elongation factor G a second chance to translocate the tRNAs correctly. Binds to ribosomes in a GTP-dependent manner. The polypeptide is Elongation factor 4 (Neisseria meningitidis serogroup B (strain ATCC BAA-335 / MC58)).